Reading from the N-terminus, the 390-residue chain is 1-deoxy-D-xylulose 5-phosphate reductoisomerase (390 aa).

Thr10, Gly11, Ser12, Val13, Gly38, Asn40, and Asn123 together coordinate NADPH. Position 124 (Lys124) interacts with 1-deoxy-D-xylulose 5-phosphate. NADPH is bound at residue Glu125. Residue Asp149 participates in Mn(2+) binding. 1-deoxy-D-xylulose 5-phosphate contacts are provided by Ser150, Glu151, Ser175, and His198. Glu151 is a binding site for Mn(2+). Gly204 provides a ligand contact to NADPH. Ser211, Asn216, Lys217, and Glu220 together coordinate 1-deoxy-D-xylulose 5-phosphate. A Mn(2+)-binding site is contributed by Glu220.

Belongs to the DXR family. It depends on Mg(2+) as a cofactor. The cofactor is Mn(2+).

The catalysed reaction is 2-C-methyl-D-erythritol 4-phosphate + NADP(+) = 1-deoxy-D-xylulose 5-phosphate + NADPH + H(+). Its pathway is isoprenoid biosynthesis; isopentenyl diphosphate biosynthesis via DXP pathway; isopentenyl diphosphate from 1-deoxy-D-xylulose 5-phosphate: step 1/6. Catalyzes the NADPH-dependent rearrangement and reduction of 1-deoxy-D-xylulose-5-phosphate (DXP) to 2-C-methyl-D-erythritol 4-phosphate (MEP). In Paracoccus denitrificans (strain Pd 1222), this protein is 1-deoxy-D-xylulose 5-phosphate reductoisomerase.